Consider the following 243-residue polypeptide: Collagen triple helix repeat-containing protein 1 (243 aa).

A signal peptide spans 1 to 30; it reads MRPQGPAASPQRLRGLLLLLLLQLPAPSSA. The Collagen-like domain maps to 57–90; that stretch reads QGPAGVPGRDGSPGANGIPGTPGIPGRDGFKGEK. Residues 62–85 form a disordered region; it reads VPGRDGSPGANGIPGTPGIPGRDG. N186 is a glycosylation site (N-linked (GlcNAc...) asparagine).

N-glycosylated. In terms of tissue distribution, isoform 1 is expressed in calcified atherosclerotic plaque and chondrocyte-like cells.

It localises to the secreted. The protein localises to the extracellular space. Its subcellular location is the extracellular matrix. Its function is as follows. May act as a negative regulator of collagen matrix deposition. The chain is Collagen triple helix repeat-containing protein 1 (CTHRC1) from Homo sapiens (Human).